A 410-amino-acid polypeptide reads, in one-letter code: Beta-arrestin-2 (410 aa).

Tyr48 is subject to Phosphotyrosine. Residues Pro176 and Pro181 each carry the hydroxyproline; by PHD2 modification. The interval 241–410 (ADICLFSTAQ…KDDDCDDQFC (170 aa)) is interaction with TRAF6. Ser361 carries the post-translational modification Phosphoserine. Positions 378 to 410 (DTNYATDDDIVFEDFARLRLKGMKDDDCDDQFC) are interaction with AP2B1. The residue at position 383 (Thr383) is a Phosphothreonine; by CaMK2. The short motif at 386 to 396 (DIVFEDFARLR) is the [DE]-X(1,2)-F-X-X-[FL]-X-X-X-R motif element.

The protein belongs to the arrestin family. As to quaternary structure, homooligomer; the self-association is mediated by InsP6-binding. Heterooligomer with ARRB1; the association is mediated by InsP6-binding. Interacts with ADRB2 and CHRM2. Interacts with PDE4A. Interacts with PDE4D. Interacts with MAPK10, MAPK1 and MAPK3. Interacts with DRD2. Interacts with FSHR. Interacts with CLTC. Interacts with HTR2C. Interacts with CCR5. Interacts with CXCR4. Interacts with SRC. Interacts with DUSP16; the interaction is interrupted by stimulation of AGTR1 and activation of MAPK10. Interacts with CHUK; the interaction is enhanced stimulation of ADRB2. Interacts with RELA. Interacts with MDM2; the interaction is enhanced by activation of GPCRs. Interacts with SLC9A5. Interacts with TRAF6. Interacts with IGF1R. Interacts with ENG. Interacts with KIR2DL1, KIR2DL3 and KIR2DL4. Interacts with LDLR. Interacts with AP2B1. Interacts with C5AR1. Interacts with RAF1. Interacts with MAP2K1. Interacts with MAPK1. Interacts with MAPK10; the interaction enhances MAPK10 activation by MAP3K5. Interacts with MAP2K4; the interaction is enhanced by presence of MAP3K5 and MAPK10. Interacts with MAP3K5. Interacts with AKT1. Interacts with IKBKB and MAP3K14. Interacts with SMO (activated). Interacts with GSK3A and GSK3B. Associates with protein phosphatase 2A (PP2A). Interacts with CXCR4; the interaction is dependent on C-terminal phosphorylation of CXCR4 and allows activation of MAPK1 and MAPK3. Interacts with GPR143. Interacts with HCK and CXCR1 (phosphorylated). Interacts with ACKR3 and ACKR4. Interacts with ARRDC1; the interaction is direct. Interacts with GPR61, GPR62 and GPR135. Interacts (via NACHT and LRR domains) with NLRP3; this interaction is direct and inducible by omega-3 polyunsaturated fatty acids (PUFAs). Interacts with FFAR4 (via C-terminus); this interaction is stimulated by long-chain fatty acids (LCFAs). Interacts with GPR35. Interacts with GPR84. Interacts with TIGIT; this interaction inhibits the NF-kappa-B pathway. Interacts with TGFBR3. Post-translationally, phosphorylated at Thr-383 in the cytoplasm; probably dephosphorylated at the plasma membrane. The phosphorylation does not regulate internalization and recycling of ADRB2, interaction with clathrin or AP2B1. In terms of processing, the ubiquitination status appears to regulate the formation and trafficking of beta-arrestin-GPCR complexes and signaling. Ubiquitination appears to occur GPCR-specific. Ubiquitinated by MDM2; the ubiquitination is required for rapid internalization of ADRB2. Deubiquitinated by USP33; the deubiquitination leads to a dissociation of the beta-arrestin-GPCR complex. Stimulation of a class A GPCR, such as ADRB2, induces transient ubiquitination and subsequently promotes association with USP33. Stimulation of a class B GPCR promotes a sustained ubiquitination. Deubiquitinated by USP20; allowing USP20 to deubiquitinate TRAF6 leading to inhibition of NF-kappa-B signaling. Hydroxylation by PHD2 modulates the rate of internalization by slowing down recruitment to the plasma membrane and inhibiting subsequent co-internalization with class A receptors. Predominantly localized in neuronal tissues and in the spleen.

The protein localises to the cytoplasm. It is found in the nucleus. Its subcellular location is the cell membrane. It localises to the membrane. The protein resides in the clathrin-coated pit. The protein localises to the cytoplasmic vesicle. Its function is as follows. Functions in regulating agonist-mediated G-protein coupled receptor (GPCR) signaling by mediating both receptor desensitization and resensitization processes. During homologous desensitization, beta-arrestins bind to the GPRK-phosphorylated receptor and sterically preclude its coupling to the cognate G-protein; the binding appears to require additional receptor determinants exposed only in the active receptor conformation. The beta-arrestins target many receptors for internalization by acting as endocytic adapters (CLASPs, clathrin-associated sorting proteins) and recruiting the GPRCs to the adapter protein 2 complex 2 (AP-2) in clathrin-coated pits (CCPs). However, the extent of beta-arrestin involvement appears to vary significantly depending on the receptor, agonist and cell type. Internalized arrestin-receptor complexes traffic to intracellular endosomes, where they remain uncoupled from G-proteins. Two different modes of arrestin-mediated internalization occur. Class A receptors, like ADRB2, OPRM1, ENDRA, D1AR and ADRA1B dissociate from beta-arrestin at or near the plasma membrane and undergo rapid recycling. Class B receptors, like AVPR2, AGTR1, NTSR1, TRHR and TACR1 internalize as a complex with arrestin and traffic with it to endosomal vesicles, presumably as desensitized receptors, for extended periods of time. Receptor resensitization then requires that receptor-bound arrestin is removed so that the receptor can be dephosphorylated and returned to the plasma membrane. Mediates endocytosis of CCR7 following ligation of CCL19 but not CCL21. Involved in internalization of P2RY1, P2RY4, P2RY6 and P2RY11 and ATP-stimulated internalization of P2RY2. Involved in phosphorylation-dependent internalization of OPRD1 and subsequent recycling or degradation. Involved in ubiquitination of IGF1R. Beta-arrestins function as multivalent adapter proteins that can switch the GPCR from a G-protein signaling mode that transmits short-lived signals from the plasma membrane via small molecule second messengers and ion channels to a beta-arrestin signaling mode that transmits a distinct set of signals that are initiated as the receptor internalizes and transits the intracellular compartment. Acts as a signaling scaffold for MAPK pathways such as MAPK1/3 (ERK1/2) and MAPK10 (JNK3). ERK1/2 and JNK3 activated by the beta-arrestin scaffold are largely excluded from the nucleus and confined to cytoplasmic locations such as endocytic vesicles, also called beta-arrestin signalosomes. Acts as a signaling scaffold for the AKT1 pathway. GPCRs for which the beta-arrestin-mediated signaling relies on both ARRB1 and ARRB2 (codependent regulation) include ADRB2, F2RL1 and PTH1R. For some GPCRs the beta-arrestin-mediated signaling relies on either ARRB1 or ARRB2 and is inhibited by the other respective beta-arrestin form (reciprocal regulation). Increases ERK1/2 signaling in AGTR1- and AVPR2-mediated activation (reciprocal regulation). Involved in CCR7-mediated ERK1/2 signaling involving ligand CCL19. Is involved in type-1A angiotensin II receptor/AGTR1-mediated ERK activity. Is involved in type-1A angiotensin II receptor/AGTR1-mediated MAPK10 activity. Is involved in dopamine-stimulated AKT1 activity in the striatum by disrupting the association of AKT1 with its negative regulator PP2A. Involved in AGTR1-mediated chemotaxis. Appears to function as signaling scaffold involved in regulation of MIP-1-beta-stimulated CCR5-dependent chemotaxis. Involved in attenuation of NF-kappa-B-dependent transcription in response to GPCR or cytokine stimulation by interacting with and stabilizing CHUK. Suppresses UV-induced NF-kappa-B-dependent activation by interacting with CHUK. The function is promoted by stimulation of ADRB2 and dephosphorylation of ARRB2. Involved in IL8-mediated granule release in neutrophils. Involved in p53/TP53-mediated apoptosis by regulating MDM2 and reducing the MDM2-mediated degradation of p53/TP53. May serve as nuclear messenger for GPCRs. Upon stimulation of OR1D2, may be involved in regulation of gene expression during the early processes of fertilization. Also involved in regulation of receptors other than GPCRs. Involved in endocytosis of TGFBR2 and TGFBR3 and down-regulates TGF-beta signaling such as NF-kappa-B activation. Involved in endocytosis of low-density lipoprotein receptor/LDLR. Involved in endocytosis of smoothened homolog/Smo, which also requires GRK2. Involved in endocytosis of SLC9A5. Involved in endocytosis of ENG and subsequent TGF-beta-mediated ERK activation and migration of epithelial cells. Involved in Toll-like receptor and IL-1 receptor signaling through the interaction with TRAF6 which prevents TRAF6 autoubiquitination and oligomerization required for activation of NF-kappa-B and JUN. Involved in insulin resistance by acting as insulin-induced signaling scaffold for SRC, AKT1 and INSR. Involved in regulation of inhibitory signaling of natural killer cells by recruiting PTPN6 and PTPN11 to KIR2DL1. Involved in the internalization of the atypical chemokine receptor ACKR3. Acts as an adapter protein coupling FFAR4 receptor to specific downstream signaling pathways, as well as mediating receptor endocytosis. During the activation step of NLRP3 inflammasome, directly associates with NLRP3 leading to inhibition of pro-inflammatory cytokine release and inhibition of inflammation. This Rattus norvegicus (Rat) protein is Beta-arrestin-2 (Arrb2).